Consider the following 330-residue polypeptide: Mycothiol acetyltransferase (330 aa).

N-acetyltransferase domains lie at 5-142 (LVTD…MPLR) and 171-328 (VRLR…APRP). Glu36 contacts 1D-myo-inositol 2-(L-cysteinylamino)-2-deoxy-alpha-D-glucopyranoside. 80-82 (VVV) contributes to the acetyl-CoA binding site. Residues 142–161 (RDIAGDEPGGPWEAPELPEP) are disordered. Residues Glu198, Lys238, and Glu254 each contribute to the 1D-myo-inositol 2-(L-cysteinylamino)-2-deoxy-alpha-D-glucopyranoside site. Acetyl-CoA-binding positions include 258–260 (VGV) and 265–271 (QGSGLGR). Tyr292 provides a ligand contact to 1D-myo-inositol 2-(L-cysteinylamino)-2-deoxy-alpha-D-glucopyranoside. 297–302 (NEAAVR) contributes to the acetyl-CoA binding site.

This sequence belongs to the acetyltransferase family. MshD subfamily. In terms of assembly, monomer.

It carries out the reaction 1D-myo-inositol 2-(L-cysteinylamino)-2-deoxy-alpha-D-glucopyranoside + acetyl-CoA = mycothiol + CoA + H(+). Its function is as follows. Catalyzes the transfer of acetyl from acetyl-CoA to desacetylmycothiol (Cys-GlcN-Ins) to form mycothiol. The polypeptide is Mycothiol acetyltransferase (Nocardiopsis dassonvillei (strain ATCC 23218 / DSM 43111 / CIP 107115 / JCM 7437 / KCTC 9190 / NBRC 14626 / NCTC 10488 / NRRL B-5397 / IMRU 509) (Actinomadura dassonvillei)).